The primary structure comprises 169 residues: E1B protein, small T-antigen (169 aa).

It belongs to the adenoviridae E1B 19 kDa protein family.

This chain is E1B protein, small T-antigen, found in Canis lupus familiaris (Dog).